A 150-amino-acid polypeptide reads, in one-letter code: Large ribosomal subunit protein uL11 (150 aa).

This sequence belongs to the universal ribosomal protein uL11 family. In terms of assembly, part of the ribosomal stalk of the 50S ribosomal subunit. Interacts with L10 and the large rRNA to form the base of the stalk. L10 forms an elongated spine to which L12 dimers bind in a sequential fashion forming a multimeric L10(L12)X complex. In terms of processing, one or more lysine residues are methylated.

Functionally, forms part of the ribosomal stalk which helps the ribosome interact with GTP-bound translation factors. The protein is Large ribosomal subunit protein uL11 of Ureaplasma parvum serovar 3 (strain ATCC 27815 / 27 / NCTC 11736).